The sequence spans 142 residues: Large ribosomal subunit protein uL11 (142 aa).

Belongs to the universal ribosomal protein uL11 family. Part of the ribosomal stalk of the 50S ribosomal subunit. Interacts with L10 and the large rRNA to form the base of the stalk. L10 forms an elongated spine to which L12 dimers bind in a sequential fashion forming a multimeric L10(L12)X complex. Post-translationally, one or more lysine residues are methylated.

Forms part of the ribosomal stalk which helps the ribosome interact with GTP-bound translation factors. In Proteus vulgaris, this protein is Large ribosomal subunit protein uL11.